A 310-amino-acid chain; its full sequence is Cytochrome f (310 aa).

A signal peptide spans 1 to 23; it reads MRRLIPILLGSLVLSLSILVAPA. Heme contacts are provided by Tyr-28, Cys-48, Cys-51, and His-52. A helical membrane pass occupies residues 277-297; it reads IYGLLAFFVAVSLAQILLVLK.

It belongs to the cytochrome f family. In terms of assembly, the 4 large subunits of the cytochrome b6-f complex are cytochrome b6, subunit IV (17 kDa polypeptide, PetD), cytochrome f and the Rieske protein, while the 4 small subunits are PetG, PetL, PetM and PetN. The complex functions as a dimer. Heme is required as a cofactor.

Its subcellular location is the cellular thylakoid membrane. In terms of biological role, component of the cytochrome b6-f complex, which mediates electron transfer between photosystem II (PSII) and photosystem I (PSI), cyclic electron flow around PSI, and state transitions. The chain is Cytochrome f from Prochlorococcus marinus (strain MIT 9313).